An 88-amino-acid polypeptide reads, in one-letter code: U1-hexatoxin-Iw1d (88 aa).

The first 17 residues, 1-17, serve as a signal peptide directing secretion; the sequence is LKFVVLICLVIMASTSA. Gln18 carries the pyrrolidone carboxylic acid modification. 5 cysteine pairs are disulfide-bonded: Cys20–Cys31, Cys25–Cys39, Cys30–Cys65, Cys49–Cys73, and Cys67–Cys80. A propeptide spanning residues 86 to 88 is cleaved from the precursor; that stretch reads RSE.

It belongs to the MIT-like AcTx family. As to expression, expressed by the venom gland.

It localises to the secreted. In Illawarra wisharti (Illawarra funnel-web spider), this protein is U1-hexatoxin-Iw1d.